Here is a 95-residue protein sequence, read N- to C-terminus: Feather keratin B-4 (95 aa).

Ser1 is subject to N-acetylserine.

Belongs to the avian keratin family. The avian keratins (F-ker, S-ker, C-ker and B-ker) are a complex mixture of very similar polypeptides.

The sequence is that of Feather keratin B-4 from Columba livia (Rock dove).